The following is a 308-amino-acid chain: Maspardin (308 aa).

One can recognise an AB hydrolase-1 domain in the interval phenylalanine 87–methionine 159. Serine 304 is modified (phosphoserine).

It belongs to the AB hydrolase superfamily. In terms of assembly, interacts with CD4. Interacts with ALDH16A1. As to expression, expressed in cell lines FT.1 and in a L cell fibroblast derivative (at protein level).

The protein localises to the cytoplasm. Functionally, may play a role as a negative regulatory factor in CD4-dependent T-cell activation. In Mus musculus (Mouse), this protein is Maspardin (Spg21).